Reading from the N-terminus, the 419-residue chain is Chalcone synthase D (419 aa).

Cys-164 is a catalytic residue.

It belongs to the thiolase-like superfamily. Chalcone/stilbene synthases family.

The enzyme catalyses (E)-4-coumaroyl-CoA + 3 malonyl-CoA + 3 H(+) = 2',4,4',6'-tetrahydroxychalcone + 3 CO2 + 4 CoA. It participates in secondary metabolite biosynthesis; flavonoid biosynthesis. Functionally, the primary product of this enzyme is 4,2',4',6'-tetrahydroxychalcone (also termed naringenin-chalcone or chalcone) which can under specific conditions spontaneously isomerize into naringenin. This chain is Chalcone synthase D (CHSD), found in Petunia hybrida (Petunia).